The primary structure comprises 339 residues: Beta-ketoacyl-[acyl-carrier-protein] synthase III (339 aa).

Catalysis depends on residues Cys-121 and His-257. The interval 258–262 (QANLR) is ACP-binding. Asn-288 is an active-site residue.

Belongs to the thiolase-like superfamily. FabH family. As to quaternary structure, homodimer.

It is found in the cytoplasm. It catalyses the reaction malonyl-[ACP] + propanoyl-CoA + H(+) = 3-oxopentanoyl-[ACP] + CO2 + CoA. The enzyme catalyses 2-methylpropanoyl-CoA + malonyl-[ACP] + H(+) = 4-methyl-3-oxopentanoyl-[ACP] + CO2 + CoA. The catalysed reaction is malonyl-[ACP] + acetyl-CoA + H(+) = 3-oxobutanoyl-[ACP] + CO2 + CoA. It carries out the reaction butanoyl-CoA + malonyl-[ACP] + H(+) = 3-oxohexanoyl-[ACP] + CO2 + CoA. The protein operates within lipid metabolism; fatty acid biosynthesis. In terms of biological role, catalyzes the condensation reaction of fatty acid synthesis by the addition to an acyl acceptor of two carbons from malonyl-ACP. Catalyzes the first condensation reaction which initiates fatty acid synthesis and may therefore play a role in governing the total rate of fatty acid production. Possesses both acetoacetyl-ACP synthase and acetyl transacylase activities. Propionyl-CoA and isobutyryl-CoA were the two most preferred substrates, although acetyl-CoA and butyryl-CoA could also be accepted and elongated. Involved in the biosynthesis of R1128 polyketide. This Streptomyces lividans protein is Beta-ketoacyl-[acyl-carrier-protein] synthase III.